The following is a 264-amino-acid chain: S-adenosylmethionine decarboxylase proenzyme (264 aa).

Ser113 acts as the Schiff-base intermediate with substrate; via pyruvic acid in catalysis. Ser113 carries the pyruvic acid (Ser); by autocatalysis modification. Catalysis depends on His118, which acts as the Proton acceptor; for processing activity. Cys141 serves as the catalytic Proton donor; for catalytic activity.

Belongs to the prokaryotic AdoMetDC family. Type 2 subfamily. In terms of assembly, heterooctamer of four alpha and four beta chains arranged as a tetramer of alpha/beta heterodimers. The cofactor is pyruvate. In terms of processing, is synthesized initially as an inactive proenzyme. Formation of the active enzyme involves a self-maturation process in which the active site pyruvoyl group is generated from an internal serine residue via an autocatalytic post-translational modification. Two non-identical subunits are generated from the proenzyme in this reaction, and the pyruvate is formed at the N-terminus of the alpha chain, which is derived from the carboxyl end of the proenzyme. The post-translation cleavage follows an unusual pathway, termed non-hydrolytic serinolysis, in which the side chain hydroxyl group of the serine supplies its oxygen atom to form the C-terminus of the beta chain, while the remainder of the serine residue undergoes an oxidative deamination to produce ammonia and the pyruvoyl group blocking the N-terminus of the alpha chain.

The catalysed reaction is S-adenosyl-L-methionine + H(+) = S-adenosyl 3-(methylsulfanyl)propylamine + CO2. It functions in the pathway amine and polyamine biosynthesis; S-adenosylmethioninamine biosynthesis; S-adenosylmethioninamine from S-adenosyl-L-methionine: step 1/1. In terms of biological role, catalyzes the decarboxylation of S-adenosylmethionine to S-adenosylmethioninamine (dcAdoMet), the propylamine donor required for the synthesis of the polyamines spermine and spermidine from the diamine putrescine. The polypeptide is S-adenosylmethionine decarboxylase proenzyme (Xanthomonas campestris pv. campestris (strain B100)).